The following is a 323-amino-acid chain: Arginase, hepatic (323 aa).

Residues H102, D125, H127, and D129 each contribute to the Mn(2+) site. Residues 127-131 (HADIN), 138-140 (SGN), and D184 each bind substrate. D233 and D235 together coordinate Mn(2+). Positions 247 and 278 each coordinate substrate.

It belongs to the arginase family. Homotrimer. Mn(2+) serves as cofactor.

The catalysed reaction is L-arginine + H2O = urea + L-ornithine. The protein operates within nitrogen metabolism; urea cycle; L-ornithine and urea from L-arginine: step 1/1. In Aquarana catesbeiana (American bullfrog), this protein is Arginase, hepatic.